Reading from the N-terminus, the 329-residue chain is Diaminopimelate epimerase (329 aa).

The substrate site is built by Asn-14 and Asn-73. Catalysis depends on Cys-82, which acts as the Proton donor. Substrate-binding positions include 83–84 (GN), Asn-170, Asn-206, and 224–225 (ER). The active-site Proton acceptor is the Cys-233. A substrate-binding site is contributed by 234–235 (GT).

The protein belongs to the diaminopimelate epimerase family. Homodimer.

The protein resides in the cytoplasm. The catalysed reaction is (2S,6S)-2,6-diaminopimelate = meso-2,6-diaminopimelate. It functions in the pathway amino-acid biosynthesis; L-lysine biosynthesis via DAP pathway; DL-2,6-diaminopimelate from LL-2,6-diaminopimelate: step 1/1. Catalyzes the stereoinversion of LL-2,6-diaminopimelate (L,L-DAP) to meso-diaminopimelate (meso-DAP), a precursor of L-lysine and an essential component of the bacterial peptidoglycan. This is Diaminopimelate epimerase from Listeria monocytogenes serovar 1/2a (strain ATCC BAA-679 / EGD-e).